We begin with the raw amino-acid sequence, 216 residues long: HTH-type transcriptional regulator EthR (216 aa).

Over residues 1-10 (MTTSAASQAS) the composition is skewed to polar residues. Residues 1-24 (MTTSAASQASLPRGRRTARPSGDD) form a disordered region. Residues 23-83 (DDRELAILAT…TLLDRVVNQA (61 aa)) enclose the HTH tetR-type domain. Residues 46 to 65 (SVDDLAKGAGISRPTFYFYF) constitute a DNA-binding region (H-T-H motif).

In terms of assembly, homodimer.

Involved in the repression of the monooxygenase EthA which is responsible of the formation of the active metabolite of ethionamide (ETH). The polypeptide is HTH-type transcriptional regulator EthR (ethR) (Mycobacterium bovis (strain ATCC BAA-935 / AF2122/97)).